The primary structure comprises 95 residues: PqqA binding protein (95 aa).

Belongs to the PqqD family. As to quaternary structure, monomer. Interacts with PqqE.

Its pathway is cofactor biosynthesis; pyrroloquinoline quinone biosynthesis. In terms of biological role, functions as a PqqA binding protein and presents PqqA to PqqE, in the pyrroloquinoline quinone (PQQ) biosynthetic pathway. This Rahnella aquatilis protein is PqqA binding protein.